Here is a 642-residue protein sequence, read N- to C-terminus: Threonine--tRNA ligase (642 aa).

A TGS domain is found at 1-61 (MPVITLPDGS…ETDATLSIIT (61 aa)). Residues 243-534 (DHRKIGKQLD…LTEETAGYFP (292 aa)) form a catalytic region. Residues Cys-334, His-385, and His-511 each coordinate Zn(2+).

The protein belongs to the class-II aminoacyl-tRNA synthetase family. In terms of assembly, homodimer. Requires Zn(2+) as cofactor.

The protein localises to the cytoplasm. The enzyme catalyses tRNA(Thr) + L-threonine + ATP = L-threonyl-tRNA(Thr) + AMP + diphosphate + H(+). Catalyzes the attachment of threonine to tRNA(Thr) in a two-step reaction: L-threonine is first activated by ATP to form Thr-AMP and then transferred to the acceptor end of tRNA(Thr). Also edits incorrectly charged L-seryl-tRNA(Thr). This is Threonine--tRNA ligase from Tolumonas auensis (strain DSM 9187 / NBRC 110442 / TA 4).